Consider the following 80-residue polypeptide: Putative membrane protein insertion efficiency factor (80 aa).

Residues 61–80 (KTGKDPVPDRFSLKRNQEGE) form a disordered region. The span at 62–80 (TGKDPVPDRFSLKRNQEGE) shows a compositional bias: basic and acidic residues.

Belongs to the UPF0161 family.

The protein resides in the cell membrane. Its function is as follows. Could be involved in insertion of integral membrane proteins into the membrane. The polypeptide is Putative membrane protein insertion efficiency factor (Streptococcus pneumoniae (strain P1031)).